The sequence spans 412 residues: Short-chain specific acyl-CoA dehydrogenase, mitochondrial (412 aa).

A mitochondrion-targeting transit peptide spans 1 to 24 (MAAALLARAGGSLGRALRARDWRR). T27 carries the post-translational modification Phosphothreonine. Position 51 is an N6-acetyllysine; alternate (K51). An N6-succinyllysine; alternate modification is found at K51. K72 is modified (N6-acetyllysine). Position 129 is an N6-acetyllysine; alternate (K129). K129 is modified (N6-succinyllysine; alternate). FAD is bound by residues 152 to 161 (FALSEPGNGS) and 185 to 187 (WIT). Substrate is bound at residue S161. Position 208 is an N6-acetyllysine (K208). Residue K262 is modified to N6-acetyllysine; alternate. Residue K262 is modified to N6-succinyllysine; alternate. Substrate is bound at residue 269–272 (DMGR). K292 is subject to N6-acetyllysine. FAD is bound at residue R297. K306 is subject to N6-acetyllysine; alternate. An N6-succinyllysine; alternate modification is found at K306. Position 365-369 (365-369 (QILGG)) interacts with FAD. E392 functions as the Proton acceptor in the catalytic mechanism. 394–396 (TSE) lines the FAD pocket.

The protein belongs to the acyl-CoA dehydrogenase family. In terms of assembly, homotetramer. FAD serves as cofactor.

The protein resides in the mitochondrion matrix. The catalysed reaction is a short-chain 2,3-saturated fatty acyl-CoA + oxidized [electron-transfer flavoprotein] + H(+) = a short-chain (2E)-enoyl-CoA + reduced [electron-transfer flavoprotein]. It carries out the reaction butanoyl-CoA + oxidized [electron-transfer flavoprotein] + H(+) = (2E)-butenoyl-CoA + reduced [electron-transfer flavoprotein]. It catalyses the reaction pentanoyl-CoA + oxidized [electron-transfer flavoprotein] + H(+) = (2E)-pentenoyl-CoA + reduced [electron-transfer flavoprotein]. The enzyme catalyses hexanoyl-CoA + oxidized [electron-transfer flavoprotein] + H(+) = (2E)-hexenoyl-CoA + reduced [electron-transfer flavoprotein]. The protein operates within lipid metabolism; mitochondrial fatty acid beta-oxidation. Functionally, short-chain specific acyl-CoA dehydrogenase is one of the acyl-CoA dehydrogenases that catalyze the first step of mitochondrial fatty acid beta-oxidation, an aerobic process breaking down fatty acids into acetyl-CoA and allowing the production of energy from fats. The first step of fatty acid beta-oxidation consists in the removal of one hydrogen from C-2 and C-3 of the straight-chain fatty acyl-CoA thioester, resulting in the formation of trans-2-enoyl-CoA. Among the different mitochondrial acyl-CoA dehydrogenases, short-chain specific acyl-CoA dehydrogenase acts specifically on acyl-CoAs with saturated 4 to 6 carbons long primary chains. In Rattus norvegicus (Rat), this protein is Short-chain specific acyl-CoA dehydrogenase, mitochondrial (Acads).